Consider the following 503-residue polypeptide: Drimenol monooxygenase (503 aa).

Residues Met7–Ser23 form a helical membrane-spanning segment. Position 471 (Ser471) interacts with heme.

It belongs to the cytochrome P450 family. Requires heme as cofactor.

Its subcellular location is the membrane. It catalyses the reaction (5S,9S,10S)-drim-7-en-11-ol + reduced [NADPH--hemoprotein reductase] + O2 = (5S,10S)-(9R)-7-drimene-11,12-diol + oxidized [NADPH--hemoprotein reductase] + H2O + H(+). Catalyzes the conversion of drimenol to drimendiol, a precursor of the sesquiterpenoid polygodial. Polygodial has been shown to be an antifeedant for a number of herbivorous insects. This chain is Drimenol monooxygenase, found in Persicaria hydropiper (Marshpepper knotweed).